We begin with the raw amino-acid sequence, 905 residues long: Nitrate reductase [NADPH] (905 aa).

Positions 1–42 are disordered; sequence METSTTTTLLQQERIPENSEPISTHIHTHSLPPTPPGTAKPS. Cysteine 179 serves as a coordination point for Mo-molybdopterin. The 76-residue stretch at 546–621 folds into the Cytochrome b5 heme-binding domain; it reads NRKITIEELK…LPTYHIGTLD (76 aa). Heme-binding residues include histidine 581 and histidine 604. The region spanning 648–759 is the FAD-binding FR-type domain; sequence KTWSKAILDK…KGPTGKFVYH (112 aa). FAD contacts are provided by residues 702–705, 719–723, 733–735, serine 783, and threonine 786; these read RSYT, LIKIY, and VMT. 875–884 contacts NADP(+); it reads LLLVCGPPPM.

It belongs to the nitrate reductase family. As to quaternary structure, homodimer. It depends on FAD as a cofactor. Heme is required as a cofactor. The cofactor is Mo-molybdopterin.

It carries out the reaction nitrite + NADP(+) + H2O = nitrate + NADPH + H(+). In terms of biological role, nitrate reductase is a key enzyme involved in the first step of nitrate assimilation in plants, fungi and bacteria. The chain is Nitrate reductase [NADPH] (NIA) from Fusarium oxysporum (Fusarium vascular wilt).